Consider the following 208-residue polypeptide: Small ribosomal subunit protein uS4 (208 aa).

The 64-residue stretch at 98–161 folds into the S4 RNA-binding domain; that stretch reads LRLDNVVFRL…RKVVRISEAL (64 aa).

The protein belongs to the universal ribosomal protein uS4 family. In terms of assembly, part of the 30S ribosomal subunit. Contacts protein S5. The interaction surface between S4 and S5 is involved in control of translational fidelity.

Its function is as follows. One of the primary rRNA binding proteins, it binds directly to 16S rRNA where it nucleates assembly of the body of the 30S subunit. In terms of biological role, with S5 and S12 plays an important role in translational accuracy. The protein is Small ribosomal subunit protein uS4 of Anaeromyxobacter sp. (strain Fw109-5).